Consider the following 557-residue polypeptide: Venom carboxylesterase-6 (557 aa).

Residues 1-21 form the signal peptide; the sequence is MYMLKLSYILLFLGFVKFSWQ. Cysteine 88 and cysteine 108 are oxidised to a cystine. Residue asparagine 145 is glycosylated (N-linked (GlcNAc...) asparagine). Serine 212 serves as the catalytic Acyl-ester intermediate. The cysteines at positions 264 and 275 are disulfide-linked. Glutamate 341 functions as the Charge relay system in the catalytic mechanism. Asparagine 374 carries N-linked (GlcNAc...) asparagine glycosylation. Histidine 464 acts as the Charge relay system in catalysis. Asparagine 478, asparagine 528, and asparagine 542 each carry an N-linked (GlcNAc...) asparagine glycan.

Belongs to the type-B carboxylesterase/lipase family. In terms of tissue distribution, expressed by the venom gland.

It is found in the secreted. It carries out the reaction a carboxylic ester + H2O = an alcohol + a carboxylate + H(+). This chain is Venom carboxylesterase-6, found in Apis mellifera (Honeybee).